Reading from the N-terminus, the 382-residue chain is Carbamoyl phosphate synthase small chain (382 aa).

The segment at 1–189 is CPSase; sequence MIKSALLVLE…GLPEAKSEDD (189 aa). Residues S47, G241, and G243 each coordinate L-glutamine. A Glutamine amidotransferase type-1 domain is found at 193-380; the sequence is HVVAYDFGAK…IELIEQYRQS (188 aa). The Nucleophile role is filled by C269. Residues L270, Q273, N311, G313, and F314 each contribute to the L-glutamine site. Catalysis depends on residues H353 and E355.

The protein belongs to the CarA family. In terms of assembly, composed of two chains; the small (or glutamine) chain promotes the hydrolysis of glutamine to ammonia, which is used by the large (or ammonia) chain to synthesize carbamoyl phosphate. Tetramer of heterodimers (alpha,beta)4.

It catalyses the reaction hydrogencarbonate + L-glutamine + 2 ATP + H2O = carbamoyl phosphate + L-glutamate + 2 ADP + phosphate + 2 H(+). It carries out the reaction L-glutamine + H2O = L-glutamate + NH4(+). It functions in the pathway amino-acid biosynthesis; L-arginine biosynthesis; carbamoyl phosphate from bicarbonate: step 1/1. Its pathway is pyrimidine metabolism; UMP biosynthesis via de novo pathway; (S)-dihydroorotate from bicarbonate: step 1/3. Its function is as follows. Small subunit of the glutamine-dependent carbamoyl phosphate synthetase (CPSase). CPSase catalyzes the formation of carbamoyl phosphate from the ammonia moiety of glutamine, carbonate, and phosphate donated by ATP, constituting the first step of 2 biosynthetic pathways, one leading to arginine and/or urea and the other to pyrimidine nucleotides. The small subunit (glutamine amidotransferase) binds and cleaves glutamine to supply the large subunit with the substrate ammonia. The polypeptide is Carbamoyl phosphate synthase small chain (Salmonella typhimurium (strain LT2 / SGSC1412 / ATCC 700720)).